Consider the following 911-residue polypeptide: Gem-associated protein 4a (911 aa).

Component of the core survival motor neuron (SMN) complex composed of Smn, Gem2, Gem3, rig/Gem5 and one of 3 almost identical Gem4 paralogs encoded by Glos/Gem4a, Gem4b or Gem4c. Interacts with Smn; the interaction is probably indirect.

In terms of biological role, component of the survival motor neuron (SMN) complex that catalyzes the assembly of small nuclear ribonucleoproteins (snRNPs), the building blocks of the spliceosome, and thereby plays an important role in the splicing of cellular pre-mRNAs. One of 3 almost identical paralogs (Glos/Gem4a, Gem4b and Gem4c), resulting from a genomic triplication, that have some redundant function. Required for neuromuscular function and organismal viability. This chain is Gem-associated protein 4a, found in Drosophila melanogaster (Fruit fly).